The following is a 94-amino-acid chain: Pyrimidine/purine nucleoside phosphorylase (94 aa).

The protein belongs to the nucleoside phosphorylase PpnP family.

The catalysed reaction is a purine D-ribonucleoside + phosphate = a purine nucleobase + alpha-D-ribose 1-phosphate. It catalyses the reaction adenosine + phosphate = alpha-D-ribose 1-phosphate + adenine. It carries out the reaction cytidine + phosphate = cytosine + alpha-D-ribose 1-phosphate. The enzyme catalyses guanosine + phosphate = alpha-D-ribose 1-phosphate + guanine. The catalysed reaction is inosine + phosphate = alpha-D-ribose 1-phosphate + hypoxanthine. It catalyses the reaction thymidine + phosphate = 2-deoxy-alpha-D-ribose 1-phosphate + thymine. It carries out the reaction uridine + phosphate = alpha-D-ribose 1-phosphate + uracil. The enzyme catalyses xanthosine + phosphate = alpha-D-ribose 1-phosphate + xanthine. Its function is as follows. Catalyzes the phosphorolysis of diverse nucleosides, yielding D-ribose 1-phosphate and the respective free bases. Can use uridine, adenosine, guanosine, cytidine, thymidine, inosine and xanthosine as substrates. Also catalyzes the reverse reactions. This Escherichia fergusonii (strain ATCC 35469 / DSM 13698 / CCUG 18766 / IAM 14443 / JCM 21226 / LMG 7866 / NBRC 102419 / NCTC 12128 / CDC 0568-73) protein is Pyrimidine/purine nucleoside phosphorylase.